A 254-amino-acid chain; its full sequence is Protein orai-2 (254 aa).

The next 4 membrane-spanning stretches (helical) occupy residues T66 to L83, L94 to I114, L148 to L168, and A196 to I216.

Belongs to the Orai family. Oligomerizes in homomeric and heteromeric ORAI complexes. Native CRAC channels most likely consist of hexameric ORAI heteromers, implying that diverse ORAI1, ORAI2 and ORAI3 subunit combinations with distinct biophysical properties can operate in a cell-type specific way. Interacts with STIM1; this regulates channel activity. Interacts with CRACR2A/EFCAB4B.

It localises to the cell membrane. It carries out the reaction Ca(2+)(in) = Ca(2+)(out). Its activity is regulated as follows. CRAC channels are regulated by fast Ca(2+)-dependent inactivation (FCDI), a mechanism that limits Ca(2+) influx and cell toxicity. ORAI2 channels display prominent FCDI. Inhibited by lanthanides such as Gd(3+) ions. In terms of biological role, pore-forming subunit of inward rectifying Ca(2+) release-activated Ca(2+) (CRAC) channels. Assembles with ORAI1 and ORAI3 to form hexameric CRAC channels that mediate Ca(2+) influx upon depletion of endoplasmic reticulum Ca(2+) store and channel activation by Ca(2+) sensor STIM1, a process known as store-operated Ca(2+) entry (SOCE). Various pore subunit combinations may account for distinct CRAC channel spatiotemporal and cell-type specific dynamics. ORAI1 mainly contributes to the generation of Ca(2+) plateaus involved in sustained Ca(2+) entry and is dispensable for cytosolic Ca(2+) oscillations, whereas ORAI2 and ORAI3 generate oscillatory patterns. CRAC channels assemble in Ca(2+) signaling microdomains where Ca(2+) influx is coupled to calmodulin and calcineurin signaling and activation of NFAT transcription factors recruited to ORAI1 via AKAP5. CRAC channels are the main pathway for Ca(2+) influx in T cells and promote the immune response to pathogens by activating NFAT-dependent cytokine and chemokine transcription. This is Protein orai-2 (ORAI2) from Homo sapiens (Human).